Here is a 131-residue protein sequence, read N- to C-terminus: Profilin-2 (131 aa).

Cysteine 13 and cysteine 115 are oxidised to a cystine. The Involved in PIP2 interaction motif lies at 81–97 (AVIRGKKGSGGITVKKT). Threonine 111 is modified (phosphothreonine).

This sequence belongs to the profilin family. Occurs in many kinds of cells as a complex with monomeric actin in a 1:1 ratio. In terms of processing, phosphorylated by MAP kinases. Pollen specific.

It localises to the cytoplasm. The protein resides in the cytoskeleton. Binds to actin and affects the structure of the cytoskeleton. At high concentrations, profilin prevents the polymerization of actin, whereas it enhances it at low concentrations. By binding to PIP2, it inhibits the formation of IP3 and DG. This chain is Profilin-2 (PRO2), found in Zea mays (Maize).